The sequence spans 398 residues: 4-hydroxy-3-methylbut-2-enyl diphosphate reductase (398 aa).

Cys66 provides a ligand contact to [4Fe-4S] cluster. His96 contacts (2E)-4-hydroxy-3-methylbut-2-enyl diphosphate. Residue His96 participates in dimethylallyl diphosphate binding. His96 lines the isopentenyl diphosphate pocket. Cys157 serves as a coordination point for [4Fe-4S] cluster. His185 contributes to the (2E)-4-hydroxy-3-methylbut-2-enyl diphosphate binding site. Residue His185 coordinates dimethylallyl diphosphate. Residue His185 coordinates isopentenyl diphosphate. Glu187 serves as the catalytic Proton donor. (2E)-4-hydroxy-3-methylbut-2-enyl diphosphate is bound at residue Thr250. Cys288 serves as a coordination point for [4Fe-4S] cluster. Positions 317, 318, 319, and 380 each coordinate (2E)-4-hydroxy-3-methylbut-2-enyl diphosphate. Dimethylallyl diphosphate contacts are provided by Ser317, Ser318, Asn319, and Ser380. Isopentenyl diphosphate contacts are provided by Ser317, Ser318, Asn319, and Ser380.

The protein belongs to the IspH family. The cofactor is [4Fe-4S] cluster.

The catalysed reaction is isopentenyl diphosphate + 2 oxidized [2Fe-2S]-[ferredoxin] + H2O = (2E)-4-hydroxy-3-methylbut-2-enyl diphosphate + 2 reduced [2Fe-2S]-[ferredoxin] + 2 H(+). It carries out the reaction dimethylallyl diphosphate + 2 oxidized [2Fe-2S]-[ferredoxin] + H2O = (2E)-4-hydroxy-3-methylbut-2-enyl diphosphate + 2 reduced [2Fe-2S]-[ferredoxin] + 2 H(+). Its pathway is isoprenoid biosynthesis; dimethylallyl diphosphate biosynthesis; dimethylallyl diphosphate from (2E)-4-hydroxy-3-methylbutenyl diphosphate: step 1/1. It functions in the pathway isoprenoid biosynthesis; isopentenyl diphosphate biosynthesis via DXP pathway; isopentenyl diphosphate from 1-deoxy-D-xylulose 5-phosphate: step 6/6. In terms of biological role, catalyzes the conversion of 1-hydroxy-2-methyl-2-(E)-butenyl 4-diphosphate (HMBPP) into a mixture of isopentenyl diphosphate (IPP) and dimethylallyl diphosphate (DMAPP). Acts in the terminal step of the DOXP/MEP pathway for isoprenoid precursor biosynthesis. In Prochlorococcus marinus subsp. pastoris (strain CCMP1986 / NIES-2087 / MED4), this protein is 4-hydroxy-3-methylbut-2-enyl diphosphate reductase.